Here is an 828-residue protein sequence, read N- to C-terminus: Phenylalanine--tRNA ligase beta subunit (828 aa).

A tRNA-binding domain is found at 44–155 (GPVDGPLTVG…GTAEPGADGA (112 aa)). The 76-residue stretch at 411 to 486 (WSPPAIQMPA…RLEGLEVIGS (76 aa)) folds into the B5 domain. Mg(2+)-binding residues include Asp-464, Asp-470, Glu-473, and Glu-474. Residues 734 to 827 (SPFPAVFQDV…AAEAVGAELR (94 aa)) form the FDX-ACB domain.

This sequence belongs to the phenylalanyl-tRNA synthetase beta subunit family. Type 1 subfamily. As to quaternary structure, tetramer of two alpha and two beta subunits. Mg(2+) is required as a cofactor.

The protein resides in the cytoplasm. It carries out the reaction tRNA(Phe) + L-phenylalanine + ATP = L-phenylalanyl-tRNA(Phe) + AMP + diphosphate + H(+). This chain is Phenylalanine--tRNA ligase beta subunit, found in Mycolicibacterium paratuberculosis (strain ATCC BAA-968 / K-10) (Mycobacterium paratuberculosis).